A 381-amino-acid chain; its full sequence is Putative acyl-CoA dehydrogenase YdbM (381 aa).

FAD contacts are provided by residues 158–160 and 337–341; these read FTT and RIVGA.

It belongs to the acyl-CoA dehydrogenase family. It depends on FAD as a cofactor.

The sequence is that of Putative acyl-CoA dehydrogenase YdbM (ydbM) from Bacillus subtilis (strain 168).